We begin with the raw amino-acid sequence, 209 residues long: Ribosomal RNA large subunit methyltransferase E (209 aa).

Residues glycine 63, tryptophan 65, aspartate 83, aspartate 99, and aspartate 124 each coordinate S-adenosyl-L-methionine. The active-site Proton acceptor is lysine 164.

The protein belongs to the class I-like SAM-binding methyltransferase superfamily. RNA methyltransferase RlmE family.

It is found in the cytoplasm. The catalysed reaction is uridine(2552) in 23S rRNA + S-adenosyl-L-methionine = 2'-O-methyluridine(2552) in 23S rRNA + S-adenosyl-L-homocysteine + H(+). In terms of biological role, specifically methylates the uridine in position 2552 of 23S rRNA at the 2'-O position of the ribose in the fully assembled 50S ribosomal subunit. This chain is Ribosomal RNA large subunit methyltransferase E, found in Tolumonas auensis (strain DSM 9187 / NBRC 110442 / TA 4).